Reading from the N-terminus, the 616-residue chain is Spastin (616 aa).

Residues 1 to 44 (MNSPGGRGKKKGSGGPSSPVPPRPPPPCLASSRPAPRPAPPPQS) are disordered. The segment at 1-50 (MNSPGGRGKKKGSGGPSSPVPPRPPPPCLASSRPAPRPAPPPQSPHKRNL) is required for nuclear localization. Topologically, residues 1–56 (MNSPGGRGKKKGSGGPSSPVPPRPPPPCLASSRPAPRPAPPPQSPHKRNLYYFSYP) are cytoplasmic. The required for interaction with ATL1 stretch occupies residues 1-80 (MNSPGGRGKK…LGLLFVWLCQ (80 aa)). Residues 1 to 194 (MNSPGGRGKK…LVMAKDRLQL (194 aa)) form a required for midbody localization region. Residues 1 to 300 (MNSPGGRGKK…STPKTNRTNK (300 aa)) form a required for interaction with RTN1 region. A Nuclear localization signal motif is present at residues 4 to 11 (PGGRGKKK). Pro residues-rich tracts occupy residues 18-28 (SPVPPRPPPPC) and 35-44 (APRPAPPPQS). Residues 50 to 87 (LYYFSYPLFLGFALLRLVAFHLGLLFVWLCQRFSRALM) form a required for interaction with SSNA1 and microtubules region. The segment at residues 57-77 (LFLGFALLRLVAFHLGLLFVW) is an intramembrane region (helical). The Nuclear export signal signature appears at 59–67 (LGFALLRLV). Residues 78 to 616 (LCQRFSRALM…WNKDFGDTTV (539 aa)) are Cytoplasmic-facing. The segment at 112-196 (EVERVRAFHK…MAKDRLQLLE (85 aa)) is sufficient for interaction with CHMP1B. Residues 114-200 (ERVRAFHKQA…RLQLLEKLQP (87 aa)) are required for interaction with microtubules. Residues 120 to 195 (HKQAFEYISV…VMAKDRLQLL (76 aa)) enclose the MIT domain. The segment at 223-266 (GHLQSESGAVPKRKDPLTHPSNSLPRSKAIMKTGSTGLSGHHRA) is disordered. The sufficient for interaction with microtubules stretch occupies residues 226-328 (QSESGAVPKR…NVDSNLANFI (103 aa)). The segment at 228–616 (ESGAVPKRKD…WNKDFGDTTV (389 aa)) is sufficient for microtubule severing. Phosphoserine is present on residues Ser245 and Ser268. The segment at 270–328 (SGLSIVSGMRQGPGPTTATHKSTPKTNRTNKPSTPTTAPRKKKDLKNFRNVDSNLANFI) is required for interaction with microtubules and microtubule severing. Residues 278–311 (MRQGPGPTTATHKSTPKTNRTNKPSTPTTAPRKK) are disordered. Residues 283–306 (GPTTATHKSTPKTNRTNKPSTPTT) show a composition bias toward polar residues. Thr306 is modified (phosphothreonine). Positions 309–312 (RKKK) match the Nuclear localization signal motif. The required for interaction with microtubules stretch occupies residues 310–312 (KKK). An ATP-binding site is contributed by 382–389 (GPPGNGKT). Ser597 bears the Phosphoserine mark.

The protein belongs to the AAA ATPase family. Spastin subfamily. In terms of assembly, homohexamer. Mostly monomeric, but assembles into hexameric structure for short periods of time. Oligomerization seems to be a prerequisite for catalytic activity. Binding to ATP in a cleft between two adjacent subunits stabilizes the homohexameric form. Binds to microtubules at least in part via the alpha-tubulin and beta-tubulin tails. The hexamer adopts a ring conformation through which microtubules pass prior to being severed. Does not interact strongly with tubulin heterodimers. Interacts (via MIT domain) with CHMP1B; the interaction is direct. Interacts with SSNA1. Interacts with ATL1. Interacts with RTN1. Interacts with ZFYVE27. Interacts with REEP1. Interacts (via MIT domain) with IST1.

The protein resides in the membrane. It is found in the endoplasmic reticulum. The protein localises to the midbody. Its subcellular location is the cytoplasm. It localises to the cytoskeleton. The protein resides in the microtubule organizing center. It is found in the centrosome. The protein localises to the perinuclear region. Its subcellular location is the nucleus. It localises to the spindle. The protein resides in the cell projection. It is found in the axon. The catalysed reaction is n ATP + n H2O + a microtubule = n ADP + n phosphate + (n+1) alpha/beta tubulin heterodimers.. Its activity is regulated as follows. Allosteric enzyme with a cooperative mechanism; at least two neighbor subunits influence each other strongly in spastin hexamers. Microtubule binding promotes cooperative interactions among spastin subunits. Its function is as follows. ATP-dependent microtubule severing protein that specifically recognizes and cuts microtubules that are polyglutamylated. Preferentially recognizes and acts on microtubules decorated with short polyglutamate tails: severing activity increases as the number of glutamates per tubulin rises from one to eight, but decreases beyond this glutamylation threshold. Severing activity is not dependent on tubulin acetylation or detyrosination. Microtubule severing promotes reorganization of cellular microtubule arrays and the release of microtubules from the centrosome following nucleation. It is critical for the biogenesis and maintenance of complex microtubule arrays in axons, spindles and cilia. SPAST is involved in abscission step of cytokinesis and nuclear envelope reassembly during anaphase in cooperation with the ESCRT-III complex. Recruited at the midbody, probably by IST1, and participates in membrane fission during abscission together with the ESCRT-III complex. Recruited to the nuclear membrane by IST1 and mediates microtubule severing, promoting nuclear envelope sealing and mitotic spindle disassembly during late anaphase. Required for membrane traffic from the endoplasmic reticulum (ER) to the Golgi and endosome recycling. Recruited by IST1 to endosomes and regulates early endosomal tubulation and recycling by mediating microtubule severing. Probably plays a role in axon growth and the formation of axonal branches. The protein is Spastin of Sus scrofa (Pig).